The sequence spans 72 residues: Large ribosomal subunit protein bL31 (72 aa).

Belongs to the bacterial ribosomal protein bL31 family. Type A subfamily. As to quaternary structure, part of the 50S ribosomal subunit.

In terms of biological role, binds the 23S rRNA. This Prosthecochloris aestuarii (strain DSM 271 / SK 413) protein is Large ribosomal subunit protein bL31.